We begin with the raw amino-acid sequence, 107 residues long: uncharacterized protein (107 aa).

This is an uncharacterized protein from Dictyostelium discoideum (Social amoeba).